A 201-amino-acid polypeptide reads, in one-letter code: ATP-dependent Clp protease proteolytic subunit (201 aa).

S98 (nucleophile) is an active-site residue. H123 is an active-site residue.

This sequence belongs to the peptidase S14 family. As to quaternary structure, fourteen ClpP subunits assemble into 2 heptameric rings which stack back to back to give a disk-like structure with a central cavity, resembling the structure of eukaryotic proteasomes.

It localises to the cytoplasm. The catalysed reaction is Hydrolysis of proteins to small peptides in the presence of ATP and magnesium. alpha-casein is the usual test substrate. In the absence of ATP, only oligopeptides shorter than five residues are hydrolyzed (such as succinyl-Leu-Tyr-|-NHMec, and Leu-Tyr-Leu-|-Tyr-Trp, in which cleavage of the -Tyr-|-Leu- and -Tyr-|-Trp bonds also occurs).. Functionally, cleaves peptides in various proteins in a process that requires ATP hydrolysis. Has a chymotrypsin-like activity. Plays a major role in the degradation of misfolded proteins. In Rickettsia peacockii (strain Rustic), this protein is ATP-dependent Clp protease proteolytic subunit.